The sequence spans 128 residues: Spore germination protein 1/2/3-related protein (128 aa).

The signal sequence occupies residues 1–26 (MNIRNTLVLLVSTVLVLMSCSIGCYA). N-linked (GlcNAc...) asparagine glycosylation is found at Asn55 and Asn119.

This sequence belongs to the Dictyostelium gerABC family.

It is found in the secreted. This is Spore germination protein 1/2/3-related protein from Dictyostelium discoideum (Social amoeba).